Here is a 241-residue protein sequence, read N- to C-terminus: Fatty acid metabolism regulator protein (241 aa).

In terms of domain architecture, HTH gntR-type spans 11 to 79 (QSPAALAEEY…HGKPTKVNNI (69 aa)). The segment at residues 39 to 58 (ERDLADKIGVTRTTLREVLQ) is a DNA-binding region (H-T-H motif).

In terms of assembly, homodimer.

Its subcellular location is the cytoplasm. In terms of biological role, multifunctional regulator of fatty acid metabolism. In Haemophilus influenzae (strain 86-028NP), this protein is Fatty acid metabolism regulator protein.